We begin with the raw amino-acid sequence, 130 residues long: Ribonuclease P protein component 2 (130 aa).

The protein belongs to the eukaryotic/archaeal RNase P protein component 2 family. In terms of assembly, consists of a catalytic RNA component and at least 4-5 protein subunits.

It is found in the cytoplasm. It carries out the reaction Endonucleolytic cleavage of RNA, removing 5'-extranucleotides from tRNA precursor.. Its function is as follows. Part of ribonuclease P, a protein complex that generates mature tRNA molecules by cleaving their 5'-ends. The sequence is that of Ribonuclease P protein component 2 from Methanococcus maripaludis (strain C5 / ATCC BAA-1333).